Here is an 83-residue protein sequence, read N- to C-terminus: Cytochrome c-554(548) (83 aa).

Heme c-binding residues include cysteine 14, cysteine 17, histidine 18, and methionine 63.

Homodimer. Binds 1 heme c group covalently per subunit.

This Halomonas halodenitrificans (strain ATCC 12084 / NCIMB 8669) (Paracoccus halodenitrificans) protein is Cytochrome c-554(548).